The chain runs to 249 residues: 2,3-bisphosphoglycerate-dependent phosphoglycerate mutase (249 aa).

Substrate is bound by residues R9 to N16, T22 to G23, R61, E88 to Y91, K99, R115 to R116, and G184 to N185. The active-site Tele-phosphohistidine intermediate is H10. The active-site Proton donor/acceptor is E88.

This sequence belongs to the phosphoglycerate mutase family. BPG-dependent PGAM subfamily. As to quaternary structure, homodimer.

It catalyses the reaction (2R)-2-phosphoglycerate = (2R)-3-phosphoglycerate. The protein operates within carbohydrate degradation; glycolysis; pyruvate from D-glyceraldehyde 3-phosphate: step 3/5. Catalyzes the interconversion of 2-phosphoglycerate and 3-phosphoglycerate. The sequence is that of 2,3-bisphosphoglycerate-dependent phosphoglycerate mutase from Xanthomonas oryzae pv. oryzae (strain PXO99A).